The chain runs to 92 residues: MSASEFDDRFVTVPLRDVTKVPSHERAGEAMNIIRQHLAKQFAVDEDAVRLDPSINDAVWSEGNNNPPRKLRVHAGSFAEDGETVVEADYEG.

It belongs to the eukaryotic ribosomal protein eL31 family.

The protein is Large ribosomal subunit protein eL31 of Halobacterium salinarum (strain ATCC 29341 / DSM 671 / R1).